Reading from the N-terminus, the 169-residue chain is MLLPIVVLVGLPGAGKSTIGRRLARALNTELVDSDELIERATGKACGAVFSELGEPAFRELEAIHVAEALKSSGVVSLGGGSVLTESTRELLKGQDVVWIDVPVEEGIRRTANERSRPVLQAADPAEHYRNLVKVRTPLYEEVATYRLRTNNRSPQQVVAAVLHHLEID.

Residue 13–18 participates in ATP binding; it reads GAGKST. A Mg(2+)-binding site is contributed by Ser-17. Substrate is bound by residues Asp-35, Arg-59, and Gly-80. Arg-117 serves as a coordination point for ATP. A substrate-binding site is contributed by Arg-136. Arg-153 is an ATP binding site.

Belongs to the shikimate kinase family. In terms of assembly, monomer. Mg(2+) serves as cofactor.

It is found in the cytoplasm. The catalysed reaction is shikimate + ATP = 3-phosphoshikimate + ADP + H(+). It participates in metabolic intermediate biosynthesis; chorismate biosynthesis; chorismate from D-erythrose 4-phosphate and phosphoenolpyruvate: step 5/7. Its function is as follows. Catalyzes the specific phosphorylation of the 3-hydroxyl group of shikimic acid using ATP as a cosubstrate. This is Shikimate kinase from Corynebacterium glutamicum (strain ATCC 13032 / DSM 20300 / JCM 1318 / BCRC 11384 / CCUG 27702 / LMG 3730 / NBRC 12168 / NCIMB 10025 / NRRL B-2784 / 534).